Here is a 1220-residue protein sequence, read N- to C-terminus: Plasma membrane calcium-transporting ATPase 1 (1220 aa).

The residue at position 2 (Gly-2) is an N-acetylglycine. The Cytoplasmic portion of the chain corresponds to 2–105 (GDMANNSVAY…KTFLQLVWEA (104 aa)). Phosphoserine is present on residues Ser-8 and Ser-17. A helical membrane pass occupies residues 106–126 (LQDVTLIILEIAAIVSLGLSF). The Extracellular segment spans residues 127 to 154 (YQPPEGDNALCGEVSVGEEEGEGETGWI). The helical transmembrane segment at 155 to 175 (EGAAILLSVVCVVLVTAFNDW) threads the bilayer. Over 176-366 (SKEKQFRGLQ…KEKSVLQGKL (191 aa)) the chain is Cytoplasmic. The tract at residues 297-356 (EEEKKDEKKKEKKNKKQDGAIENRNKAKAQDGAAMEMQPLKSEEGGDGDEKDKKKANLPK) is disordered. 2 stretches are compositionally biased toward basic and acidic residues: residues 312 to 325 (KQDG…KAKA) and 337 to 356 (KSEE…NLPK). Ser-338 is subject to Phosphoserine. A helical transmembrane segment spans residues 367-386 (TKLAVQIGKAGLLMSAITVI). The Extracellular segment spans residues 387-418 (ILVLYFVIDTFWVQKRPWLAECTPIYIQYFVK). Residues 419–439 (FFIIGVTVLVVAVPEGLPLAV) traverse the membrane as a helical segment. Over 440–855 (TISLAYSVKK…RNVYDSISKF (416 aa)) the chain is Cytoplasmic. Residue Asp-475 is the 4-aspartylphosphate intermediate of the active site. Residues Asp-475, Thr-477, and Asp-797 each coordinate Mg(2+). The chain crosses the membrane as a helical span at residues 856–876 (LQFQLTVNVVAVIVAFTGACI). Topologically, residues 877-882 (TQDSPL) are extracellular. Residues 883 to 903 (KAVQMLWVNLIMDTLASLALA) traverse the membrane as a helical segment. The Cytoplasmic segment spans residues 904–927 (TEPPTESLLLRKPYGRNKPLISRT). The helical transmembrane segment at 928 to 948 (MMKNILGHAFYQLVVVFTLLF) threads the bilayer. Topologically, residues 949-971 (AGEKFFDIDSGRNAPLHAPPSEH) are extracellular. A helical membrane pass occupies residues 972–991 (YTIVFNTFVLMQLFNEINAR). Topologically, residues 992 to 1005 (KIHGERNVFEGIFN) are cytoplasmic. A helical transmembrane segment spans residues 1006 to 1027 (NAIFCTIVLGTFVVQIIIVQFG). Over 1028-1039 (GKPFSCSELSIE) the chain is Extracellular. A helical membrane pass occupies residues 1040-1060 (QWLWSIFLGMGTLLWGQLIST). At 1061–1220 (IPTSRLKFLK…SPLHSLETSL (160 aa)) the chain is on the cytoplasmic side. A calmodulin-binding subdomain A region spans residues 1100-1117 (LRRGQILWFRGLNRIQTQ). Thr-1116 carries the phosphothreonine; by PKC modification. Residues 1118 to 1220 (IRVVNAFRSS…SPLHSLETSL (103 aa)) form a required for basolateral membrane targeting region. Residues Ser-1140 and Ser-1155 each carry the phosphoserine modification. A disordered region spans residues 1160–1220 (PLIDDTDAED…SPLHSLETSL (61 aa)). Thr-1165 carries the phosphothreonine modification. A phosphoserine mark is found at Ser-1178 and Ser-1182. The span at 1200 to 1220 (MNKSATSSSPGSPLHSLETSL) shows a compositional bias: polar residues.

This sequence belongs to the cation transport ATPase (P-type) (TC 3.A.3) family. Type IIB subfamily. In terms of assembly, monomer. Dimer. Oligomer. Calmodulin binding. Interacts with PDZD11. Interacts with SLC35G1 and STIM1. Interacts with YWHAE; interacts with the monomeric and dimeric forms of the YWHAE but prefer the monomer form; this interaction inhibits calcium-transporting ATPase activity. Interacts with NPTN; this interaction stabilizes ATP2B1 and increases ATPase activity; this interaction controls T cell calcium homeostasis following T cell activation. Interacts with EPB41; regulates small intestinal calcium absorption through regulation of membrane expression of ATP2B1. As to expression, expressed in the retina, with strongest expression in the outer plexiform layer and lower expression levels in the inner nuclear layer and the inner plexiform layer. Specifically expressed in the following retinal cell types: photoreceptor cells, cone bipolar cells and horizontal cells. Expressed in osteoclasts (at protein level). Expressed at highest levels in brain, intestine, kidney, and stomach, and at lower levels in liver, lung, aorta, portal vein, urinary bladder, diaphragm, seminal vesicles and testes. Expressed in small intestinal epithelium.

Its subcellular location is the cell membrane. It localises to the basolateral cell membrane. It is found in the synapse. The protein localises to the presynaptic cell membrane. The protein resides in the cytoplasmic vesicle. Its subcellular location is the secretory vesicle. It localises to the synaptic vesicle membrane. It catalyses the reaction Ca(2+)(in) + ATP + H2O = Ca(2+)(out) + ADP + phosphate + H(+). In terms of biological role, catalyzes the hydrolysis of ATP coupled with the transport of calcium from the cytoplasm to the extracellular space thereby maintaining intracellular calcium homeostasis. Plays a role in blood pressure regulation through regulation of intracellular calcium concentration and nitric oxide production leading to regulation of vascular smooth muscle cells vasoconstriction. Positively regulates bone mineralization through absorption of calcium from the intestine. Plays dual roles in osteoclast differentiation and survival by regulating RANKL-induced calcium oscillations in preosteoclasts and mediating calcium extrusion in mature osteoclasts. Regulates insulin sensitivity through calcium/calmodulin signaling pathway by regulating AKT1 activation and NOS3 activation in endothelial cells. May play a role in synaptic transmission by modulating calcium and proton dynamics at the synaptic vesicles. The sequence is that of Plasma membrane calcium-transporting ATPase 1 from Mus musculus (Mouse).